Here is a 388-residue protein sequence, read N- to C-terminus: Succinate--CoA ligase [ADP-forming] subunit beta (388 aa).

An ATP-grasp domain is found at 9–244 (KQLFARYGLP…QSQEDPREAQ (236 aa)). Residues K46, 53-55 (GRG), E99, T102, and E107 each bind ATP. Mg(2+) contacts are provided by N199 and D213. Substrate is bound by residues N264 and 321-323 (GIV).

The protein belongs to the succinate/malate CoA ligase beta subunit family. As to quaternary structure, heterotetramer of two alpha and two beta subunits. Mg(2+) serves as cofactor.

It catalyses the reaction succinate + ATP + CoA = succinyl-CoA + ADP + phosphate. It carries out the reaction GTP + succinate + CoA = succinyl-CoA + GDP + phosphate. It functions in the pathway carbohydrate metabolism; tricarboxylic acid cycle; succinate from succinyl-CoA (ligase route): step 1/1. Its function is as follows. Succinyl-CoA synthetase functions in the citric acid cycle (TCA), coupling the hydrolysis of succinyl-CoA to the synthesis of either ATP or GTP and thus represents the only step of substrate-level phosphorylation in the TCA. The beta subunit provides nucleotide specificity of the enzyme and binds the substrate succinate, while the binding sites for coenzyme A and phosphate are found in the alpha subunit. The protein is Succinate--CoA ligase [ADP-forming] subunit beta of Escherichia coli O8 (strain IAI1).